The primary structure comprises 175 residues: Gamma-crystallin M1 (175 aa).

4 Beta/gamma crystallin 'Greek key' domains span residues 2-40 (GKII…RVES), 41-86 (GCFM…RYPY), 89-121 (FRMR…RMSD), and 130-172 (GHWL…RRIT).

The protein belongs to the beta/gamma-crystallin family. As to quaternary structure, monomer.

Functionally, crystallins are the dominant structural components of the vertebrate eye lens. This chain is Gamma-crystallin M1 (GM1), found in Chiloscyllium indicum (Slender bamboo shark).